The primary structure comprises 579 residues: Probable pectinesterase/pectinesterase inhibitor 7 (579 aa).

A signal peptide spans 1–20 (MESPIFILITLSFFLQSVLA). Residues 22-185 (SQTLSNSSTI…TKLLGVSLAL (164 aa)) form a pectinesterase inhibitor 7 region. N-linked (GlcNAc...) asparagine glycans are attached at residues asparagine 27, asparagine 115, asparagine 174, asparagine 274, asparagine 277, asparagine 287, asparagine 326, and asparagine 333. Positions 265–564 (VTVSQDGTGN…TVTGLFIEAD (300 aa)) are pectinesterase 7. Threonine 342 is a substrate binding site. N-linked (GlcNAc...) asparagine glycosylation occurs at asparagine 359. Substrate is bound at residue glutamine 372. Aspartate 395 serves as the catalytic Proton donor; for pectinesterase activity. A disulfide bridge links cysteine 409 with cysteine 429. The active-site Nucleophile; for pectinesterase activity is the aspartate 416. 2 N-linked (GlcNAc...) asparagine glycosylation sites follow: asparagine 462 and asparagine 475. Substrate contacts are provided by arginine 484 and tryptophan 486. Asparagine 526, asparagine 533, asparagine 547, and asparagine 553 each carry an N-linked (GlcNAc...) asparagine glycan.

This sequence in the N-terminal section; belongs to the PMEI family. The protein in the C-terminal section; belongs to the pectinesterase family. Expressed in siliques.

It localises to the secreted. It is found in the cell wall. It carries out the reaction [(1-&gt;4)-alpha-D-galacturonosyl methyl ester](n) + n H2O = [(1-&gt;4)-alpha-D-galacturonosyl](n) + n methanol + n H(+). Its pathway is glycan metabolism; pectin degradation; 2-dehydro-3-deoxy-D-gluconate from pectin: step 1/5. In terms of biological role, acts in the modification of cell walls via demethylesterification of cell wall pectin. This is Probable pectinesterase/pectinesterase inhibitor 7 (PME7) from Arabidopsis thaliana (Mouse-ear cress).